The chain runs to 147 residues: Transcriptional regulator MraZ (147 aa).

SpoVT-AbrB domains follow at residues 5 to 51 (GTPV…PQPV) and 80 to 123 (ACDV…DSEK).

This sequence belongs to the MraZ family. As to quaternary structure, forms oligomers.

It is found in the cytoplasm. The protein localises to the nucleoid. The polypeptide is Transcriptional regulator MraZ (Nitrosospira multiformis (strain ATCC 25196 / NCIMB 11849 / C 71)).